Here is a 99-residue protein sequence, read N- to C-terminus: Pyruvate synthase subunit PorD (99 aa).

4Fe-4S ferredoxin-type domains follow at residues 32 to 60 and 61 to 91; these read MRPI…IQEG and GIMK…MRPE. Positions 41, 44, 47, 51, 71, 74, 77, and 81 each coordinate [4Fe-4S] cluster.

In terms of assembly, heterotetramer of one alpha, one beta, one delta and one gamma chain. [4Fe-4S] cluster serves as cofactor.

In Thermotoga maritima (strain ATCC 43589 / DSM 3109 / JCM 10099 / NBRC 100826 / MSB8), this protein is Pyruvate synthase subunit PorD (porD).